Reading from the N-terminus, the 287-residue chain is Bifunctional protein FolD (287 aa).

Residues 165 to 167 (GRS), Ser-190, and Ile-231 contribute to the NADP(+) site.

The protein belongs to the tetrahydrofolate dehydrogenase/cyclohydrolase family. As to quaternary structure, homodimer.

The enzyme catalyses (6R)-5,10-methylene-5,6,7,8-tetrahydrofolate + NADP(+) = (6R)-5,10-methenyltetrahydrofolate + NADPH. It carries out the reaction (6R)-5,10-methenyltetrahydrofolate + H2O = (6R)-10-formyltetrahydrofolate + H(+). The protein operates within one-carbon metabolism; tetrahydrofolate interconversion. Catalyzes the oxidation of 5,10-methylenetetrahydrofolate to 5,10-methenyltetrahydrofolate and then the hydrolysis of 5,10-methenyltetrahydrofolate to 10-formyltetrahydrofolate. The chain is Bifunctional protein FolD from Trichodesmium erythraeum (strain IMS101).